A 220-amino-acid polypeptide reads, in one-letter code: ATP synthase subunit 5, mitochondrial (220 aa).

It belongs to the ATPase delta chain family. As to quaternary structure, F-type ATPases have 2 components, CF(1) - the catalytic core - and CF(0) - the membrane proton channel. CF(1) has five subunits: alpha(3), beta(3), gamma(1), delta(1), epsilon(1). CF(0) has three main subunits: a, b and c.

The protein resides in the mitochondrion. It localises to the mitochondrion inner membrane. Mitochondrial membrane ATP synthase (F(1)F(0) ATP synthase or Complex V) produces ATP from ADP in the presence of a proton gradient across the membrane which is generated by electron transport complexes of the respiratory chain. F-type ATPases consist of two structural domains, F(1) - containing the extramembraneous catalytic core and F(0) - containing the membrane proton channel, linked together by a central stalk and a peripheral stalk. During catalysis, ATP synthesis in the catalytic domain of F(1) is coupled via a rotary mechanism of the central stalk subunits to proton translocation. Part of the complex F(0) domain and the peripheric stalk, which acts as a stator to hold the catalytic alpha(3)beta(3) subcomplex and subunit a/ATP6 static relative to the rotary elements. The protein is ATP synthase subunit 5, mitochondrial (atp-5) of Neurospora crassa (strain ATCC 24698 / 74-OR23-1A / CBS 708.71 / DSM 1257 / FGSC 987).